We begin with the raw amino-acid sequence, 113 residues long: Large ribosomal subunit protein uL22 (113 aa).

Belongs to the universal ribosomal protein uL22 family. As to quaternary structure, part of the 50S ribosomal subunit.

Functionally, this protein binds specifically to 23S rRNA; its binding is stimulated by other ribosomal proteins, e.g. L4, L17, and L20. It is important during the early stages of 50S assembly. It makes multiple contacts with different domains of the 23S rRNA in the assembled 50S subunit and ribosome. In terms of biological role, the globular domain of the protein is located near the polypeptide exit tunnel on the outside of the subunit, while an extended beta-hairpin is found that lines the wall of the exit tunnel in the center of the 70S ribosome. This is Large ribosomal subunit protein uL22 from Mycoplasmopsis synoviae (strain 53) (Mycoplasma synoviae).